The sequence spans 378 residues: MQSLKKYRRITVKIGSALLVDRASGLKRDWLDSLADDIAVLAQGGAEILVVSSGAIALGRTILGLGKRALKLEESQAAAAVGQIALAGAWSDALGRGALKSGQILLTLGDTEERRRYLNARATISTLLKMKAVPVINENDTVATSEIRYGDNDRLAARVATMMGADLLVLLSDIDGLYTAPPARDPKAKFIPVVDRITPDIEAMAGAAASELSRGGMRTKLDAGKIATAAGTAMIITSGTRLSPLMAIERGERATFFRPSANPVKGYKTWIAGQLEPAGRLTVDAGAVGALASGKSLLPAGVKLVSGNFSRGDTVAILSPDGREIARGLVAYDAADAVRIAGLKTAEIETVLGYEARSAMIHRDDLVVSHAGGDISGG.

K13 serves as a coordination point for ATP. Residues S53, D140, and N152 each coordinate substrate. 172–173 contacts ATP; sequence SD. In terms of domain architecture, PUA spans 278 to 355; that stretch reads AGRLTVDAGA…AEIETVLGYE (78 aa).

This sequence belongs to the glutamate 5-kinase family.

It localises to the cytoplasm. The catalysed reaction is L-glutamate + ATP = L-glutamyl 5-phosphate + ADP. It functions in the pathway amino-acid biosynthesis; L-proline biosynthesis; L-glutamate 5-semialdehyde from L-glutamate: step 1/2. In terms of biological role, catalyzes the transfer of a phosphate group to glutamate to form L-glutamate 5-phosphate. This Mesorhizobium japonicum (strain LMG 29417 / CECT 9101 / MAFF 303099) (Mesorhizobium loti (strain MAFF 303099)) protein is Glutamate 5-kinase 1.